The chain runs to 355 residues: MKVDPNKEKALAAVLIQIEKQFGKGSIMKLGEDRSMDVETISTGSLSLDVALGAGGLPMGRIVEIYGPESSGKTTLTLEVIAAAQREGKTCAFIDAEHALDPIYAKKLGVDIDNLLCSQPDTGEQALEICDALTRSGAVDVIVVDSVAALTPKAEIEGEIGDSHMGLAARMMSQAMRKLAGNLKQSNTLLIFINQIRMKIGVMFGNPETTTGGNALKFYASVRLDIRRTGAIKDGDEVVGNETRVKVVKNKVAAPFKQAEFQILYGQGINRTGELVDLGVAHKLIEKAGAWYSYKGDKIGQGRANAGKYLTENPAIATEIDKTLRELLLSNPSALAAKDDASTEDNVDLETGEVF.

67 to 74 (GPESSGKT) is an ATP binding site.

This sequence belongs to the RecA family.

The protein localises to the cytoplasm. Functionally, can catalyze the hydrolysis of ATP in the presence of single-stranded DNA, the ATP-dependent uptake of single-stranded DNA by duplex DNA, and the ATP-dependent hybridization of homologous single-stranded DNAs. It interacts with LexA causing its activation and leading to its autocatalytic cleavage. The protein is Protein RecA of Shewanella baltica (strain OS195).